The chain runs to 640 residues: UvrABC system protein C (640 aa).

Residues 35–113 (DAPGVYRMIG…IKQLKPRFNV (79 aa)) form the GIY-YIG domain. Residues 223–258 (RAVMATMAKAMEEAAEELEFERAARLRDRIRALSAV) enclose the UVR domain.

Belongs to the UvrC family. Interacts with UvrB in an incision complex.

The protein localises to the cytoplasm. Its function is as follows. The UvrABC repair system catalyzes the recognition and processing of DNA lesions. UvrC both incises the 5' and 3' sides of the lesion. The N-terminal half is responsible for the 3' incision and the C-terminal half is responsible for the 5' incision. This Caulobacter vibrioides (strain ATCC 19089 / CIP 103742 / CB 15) (Caulobacter crescentus) protein is UvrABC system protein C.